The following is a 582-amino-acid chain: MKYRTHKCNELSLNHVGEHVRLSGWVHRYRNHGGVVFIDLRDRFGITQIVCRQEENPELHRLMDQVRSEWVLCVEGLVCARLGGMENPNLVTGSIEVEVSHLEVLSRAQNLPFSISDEHINVNEELRLTYRYLDMRRGDIVDRLMCRHKVMLACRQYLDEQGFTEVVTPVLGKSTPEGARDYLVPSRIYPGNFYALPQSPQLFKQILMVGGLDRYFQIATCFRDEDLRADRQPEFSQIDMEMSFGGPEDLFPIVEELVTRLFAVKGIELSIPFQRMTYQEAKEFYGTDKPDLRFGLRLKNCCEYAKKFSFSIFLDQLAQGGTVKGFCVPGGADISRKQLDVYTDFVKRYGAMGLVWIKNQDGGISSNVAKFASEEVFHEMFEAFEAKDQDILLLIAAPEAIANQSLDHLRRLIAKERQLYDAEQYNFVWITDFPLFAKEEGELCSEHHPFTAPLEEDIPLLDKDPLSVRSSSYDLVLNGYEIASGSQRIHNPDLQNKIFSLLRLSQESVKEKFGFFIDALSFGTPPHLGIALGLDRIMMVLTGAETIREVIAFPKTQKAGDLMMSAPSEILPIQLKELGLKL.

Glutamate 177 contacts L-aspartate. Residues 201-204 (QLFK) form an aspartate region. Arginine 223 provides a ligand contact to L-aspartate. ATP contacts are provided by residues 223-225 (RDE) and glutamine 232. Histidine 447 is a binding site for L-aspartate. Glutamate 481 serves as a coordination point for ATP. Arginine 488 is an L-aspartate binding site. 533 to 536 (GLDR) serves as a coordination point for ATP.

The protein belongs to the class-II aminoacyl-tRNA synthetase family. Type 1 subfamily. As to quaternary structure, homodimer.

Its subcellular location is the cytoplasm. The enzyme catalyses tRNA(Asx) + L-aspartate + ATP = L-aspartyl-tRNA(Asx) + AMP + diphosphate. Its function is as follows. Aspartyl-tRNA synthetase with relaxed tRNA specificity since it is able to aspartylate not only its cognate tRNA(Asp) but also tRNA(Asn). Reaction proceeds in two steps: L-aspartate is first activated by ATP to form Asp-AMP and then transferred to the acceptor end of tRNA(Asp/Asn). The polypeptide is Aspartate--tRNA(Asp/Asn) ligase (Chlamydia muridarum (strain MoPn / Nigg)).